We begin with the raw amino-acid sequence, 574 residues long: PI-PLC X domain-containing protein DDB_G0269228 (574 aa).

The segment at 1–42 (MFSSIMFKKKPKQNLNENEITSQSTTTTSTLSDSKPSEKKIK) is disordered. The span at 21-34 (TSQSTTTTSTLSDS) shows a compositional bias: low complexity. The region spanning 270 to 449 (GIKSSSLRVP…LKKRIINDDG (180 aa)) is the PI-PLC X-box domain.

The polypeptide is PI-PLC X domain-containing protein DDB_G0269228 (Dictyostelium discoideum (Social amoeba)).